The following is a 117-amino-acid chain: MTRIKRGYIARRRRTKLRLFASSFRGAHSRLTRTMTQQRIRALVSAHRDRGKRKRDFRRLWITRINAVIHEMGVFYSYNEFIHNLYTKQLLLNRKILAQIALLNRSCLYTISTEIKN.

This sequence belongs to the bacterial ribosomal protein bL20 family.

The protein localises to the plastid. It is found in the chloroplast. Binds directly to 23S ribosomal RNA and is necessary for the in vitro assembly process of the 50S ribosomal subunit. It is not involved in the protein synthesizing functions of that subunit. This Lobularia maritima (Sweet alyssum) protein is Large ribosomal subunit protein bL20c.